The primary structure comprises 208 residues: Segregation and condensation protein B (208 aa).

The protein belongs to the ScpB family. As to quaternary structure, homodimer. Homodimerization may be required to stabilize the binding of ScpA to the Smc head domains. Component of a cohesin-like complex composed of ScpA, ScpB and the Smc homodimer, in which ScpA and ScpB bind to the head domain of Smc. The presence of the three proteins is required for the association of the complex with DNA.

The protein resides in the cytoplasm. Participates in chromosomal partition during cell division. May act via the formation of a condensin-like complex containing Smc and ScpA that pull DNA away from mid-cell into both cell halves. In Mycoplasma pneumoniae (strain ATCC 29342 / M129 / Subtype 1) (Mycoplasmoides pneumoniae), this protein is Segregation and condensation protein B.